The chain runs to 711 residues: Ribosomal RNA large subunit methyltransferase K/L (711 aa).

One can recognise a THUMP domain in the interval 43-154 (LGYRITLWSR…RGEITIGINF (112 aa)).

It belongs to the methyltransferase superfamily. RlmKL family.

The protein resides in the cytoplasm. It carries out the reaction guanosine(2445) in 23S rRNA + S-adenosyl-L-methionine = N(2)-methylguanosine(2445) in 23S rRNA + S-adenosyl-L-homocysteine + H(+). The enzyme catalyses guanosine(2069) in 23S rRNA + S-adenosyl-L-methionine = N(2)-methylguanosine(2069) in 23S rRNA + S-adenosyl-L-homocysteine + H(+). Specifically methylates the guanine in position 2445 (m2G2445) and the guanine in position 2069 (m7G2069) of 23S rRNA. In Shewanella pealeana (strain ATCC 700345 / ANG-SQ1), this protein is Ribosomal RNA large subunit methyltransferase K/L.